Here is a 298-residue protein sequence, read N- to C-terminus: MFKSGFVAILGRPNVGKSTFLNHVMGQKIAIMSDKAQTTRNKIMGIYTTETEQIVFIDTPGIHKPKTALGDFMVESAYSTLREVETVLFMVPADEKRGKGDDMIIERLKAAKIPVILVINKIDKVHPDQLLEQIDDFRSQMDFKEVVPISALEGNNVPTLIKLLTDNLEEGFQYFPEDQITDHPERFLVSEMVREKVLHLTQQEVPHSVAVVVESMKRDEETDKVHIRATIMVERDSQKGIIIGKQGAMLKKIGKMARRDIELMLGDKVYLETWVKVKKNWRDKKLDLADFGYNEKEY.

One can recognise an Era-type G domain in the interval 3 to 170 (KSGFVAILGR…IKLLTDNLEE (168 aa)). Residues 11-18 (GRPNVGKS) are G1. Residue 11-18 (GRPNVGKS) participates in GTP binding. Residues 37–41 (QTTRN) are G2. The tract at residues 58–61 (DTPG) is G3. Residues 58 to 62 (DTPGI) and 120 to 123 (NKID) contribute to the GTP site. Residues 120-123 (NKID) form a G4 region. Residues 149–151 (ISA) form a G5 region. In terms of domain architecture, KH type-2 spans 201-279 (TQQEVPHSVA…YLETWVKVKK (79 aa)).

The protein belongs to the TRAFAC class TrmE-Era-EngA-EngB-Septin-like GTPase superfamily. Era GTPase family. In terms of assembly, monomer.

It is found in the cytoplasm. It localises to the cell membrane. Functionally, an essential GTPase that binds both GDP and GTP, with rapid nucleotide exchange. Plays a role in 16S rRNA processing and 30S ribosomal subunit biogenesis and possibly also in cell cycle regulation and energy metabolism. The chain is GTPase Era from Streptococcus pyogenes serotype M3 (strain ATCC BAA-595 / MGAS315).